The following is a 214-amino-acid chain: ATP phosphoribosyltransferase (214 aa).

It belongs to the ATP phosphoribosyltransferase family. Short subfamily. As to quaternary structure, heteromultimer composed of HisG and HisZ subunits.

It localises to the cytoplasm. The catalysed reaction is 1-(5-phospho-beta-D-ribosyl)-ATP + diphosphate = 5-phospho-alpha-D-ribose 1-diphosphate + ATP. It participates in amino-acid biosynthesis; L-histidine biosynthesis; L-histidine from 5-phospho-alpha-D-ribose 1-diphosphate: step 1/9. Its function is as follows. Catalyzes the condensation of ATP and 5-phosphoribose 1-diphosphate to form N'-(5'-phosphoribosyl)-ATP (PR-ATP). Has a crucial role in the pathway because the rate of histidine biosynthesis seems to be controlled primarily by regulation of HisG enzymatic activity. This is ATP phosphoribosyltransferase from Methylobacillus flagellatus (strain ATCC 51484 / DSM 6875 / VKM B-1610 / KT).